The following is a 311-amino-acid chain: Aspartate carbamoyltransferase catalytic subunit (311 aa).

Residues arginine 55 and threonine 56 each coordinate carbamoyl phosphate. L-aspartate is bound at residue lysine 83. Residues arginine 105, histidine 134, and glutamine 137 each contribute to the carbamoyl phosphate site. L-aspartate contacts are provided by arginine 167 and arginine 226. Carbamoyl phosphate contacts are provided by glycine 267 and proline 268.

Belongs to the aspartate/ornithine carbamoyltransferase superfamily. ATCase family. Heterododecamer (2C3:3R2) of six catalytic PyrB chains organized as two trimers (C3), and six regulatory PyrI chains organized as three dimers (R2).

The enzyme catalyses carbamoyl phosphate + L-aspartate = N-carbamoyl-L-aspartate + phosphate + H(+). It functions in the pathway pyrimidine metabolism; UMP biosynthesis via de novo pathway; (S)-dihydroorotate from bicarbonate: step 2/3. Its function is as follows. Catalyzes the condensation of carbamoyl phosphate and aspartate to form carbamoyl aspartate and inorganic phosphate, the committed step in the de novo pyrimidine nucleotide biosynthesis pathway. In Corynebacterium jeikeium (strain K411), this protein is Aspartate carbamoyltransferase catalytic subunit.